Reading from the N-terminus, the 1481-residue chain is Cystic fibrosis transmembrane conductance regulator (1481 aa).

Residues 1-77 (MQRSPLEKAS…KLINALRRCF (77 aa)) lie on the Cytoplasmic side of the membrane. The helical transmembrane segment at 78-98 (FWRFTFYGILLYLGEVTKAVQ) threads the bilayer. Residues 81-365 (FTFYGILLYL…WAVQTWYDSL (285 aa)) form the ABC transmembrane type-1 1 domain. The Extracellular portion of the chain corresponds to 99–122 (PLLLGRIIASYDPDNKTERSIAIY). A helical membrane pass occupies residues 123–146 (LGIGLCLLFIVRTLLLHPAIFGLH). The Cytoplasmic portion of the chain corresponds to 147 to 195 (HIGMQMRIAMFSLIYKKTLKLSSRVLDKISIGQLVSLLSNNLNKFDEGL). The chain crosses the membrane as a helical span at residues 196-216 (ALAHFVWIAPLQVALLMGLIW). Residues 217–222 (ELLQAS) lie on the Extracellular side of the membrane. Residues 223-243 (AFCGLGFLIVLALFQAGLGRM) traverse the membrane as a helical segment. Topologically, residues 244-298 (MMKYRDQRAGKINERLVITSEMIENIQSVKAYCWEEAMEKMIENLRQTELKLTRK) are cytoplasmic. The chain crosses the membrane as a helical span at residues 299–319 (AAYVRYFNSSAFFFSGFFVVF). Residues 320–339 (LSVLPYALIKGIILRKIFTT) lie on the Extracellular side of the membrane. The helical transmembrane segment at 340-358 (ISFCIVLRMAVTRQFPWAV) threads the bilayer. The Cytoplasmic portion of the chain corresponds to 359–858 (QTWYDSLGAI…YLRYITLHKS (500 aa)). ATP contacts are provided by residues Trp-401, Ser-434, 458 to 465 (GSTGAGKT), and Gln-493. Residues 423–646 (NDDNNLFFSN…RPDFSSKLMG (224 aa)) form the ABC transporter 1 domain. Cys-524 carries S-palmitoyl cysteine lipidation. Ser-549 and Ser-660 each carry phosphoserine. Residues 654–831 (SSERRNSILT…EEINEEDLKE (178 aa)) form a disordered R region region. At Ser-670 the chain carries Phosphoserine; by PKA. Ser-686 carries the post-translational modification Phosphoserine. Lys-688 participates in a covalent cross-link: Glycyl lysine isopeptide (Lys-Gly) (interchain with G-Cter in ubiquitin). Ser-700 and Ser-712 each carry phosphoserine. Position 717 is a phosphothreonine (Thr-717). Ser-737, Ser-753, Ser-768, Ser-790, Ser-795, and Ser-813 each carry phosphoserine. The chain crosses the membrane as a helical span at residues 859–879 (LIFVLIWCLVIFLAEVAASLV). The 297-residue stretch at 859–1155 (LIFVLIWCLV…AVNSSIDVDS (297 aa)) folds into the ABC transmembrane type-1 2 domain. The Extracellular segment spans residues 880–918 (VLWLLRNTPFQDKGNSTYSRNNSYAVIITNTSSYYVFYI). N-linked (GlcNAc...) asparagine glycosylation is found at Asn-894, Asn-900, and Asn-909. Residues 919-939 (YVGVADTLLALGFFRGLPLVH) form a discontinuously helical membrane-spanning segment. The Cytoplasmic portion of the chain corresponds to 940–990 (TLITVSKILHHKMLHSVLQAPMSTLNTLKAGGILNRFSKDIAILDDLLPLT). Residues 991 to 1011 (IFDFIQLLLIVIGAIAVVSVL) form a helical membrane-spanning segment. Over 1012–1013 (QP) the chain is Extracellular. The helical transmembrane segment at 1014-1034 (YIFLATVPVIAAFVLLRAYFL) threads the bilayer. At 1035-1095 (QTSQQLKQLE…TANWFLYLST (61 aa)) the chain is on the cytoplasmic side. A helical transmembrane segment spans residues 1096 to 1116 (LRWFQMRIEMIFVIFFIAVTF). At 1117-1130 (ISILTTGEGEGTVG) the chain is on the extracellular side. A helical transmembrane segment spans residues 1131–1151 (IILTLAMNIMSTLQWAVNSSI). Topologically, residues 1152-1481 (DVDSLMRSVS…TEEEVQETRL (330 aa)) are cytoplasmic. In terms of domain architecture, ABC transporter 2 spans 1211-1444 (MTIKDLTAKY…KSLFRQAISH (234 aa)). ATP is bound by residues Tyr-1220 and 1245–1252 (GRTGSGKS). The tract at residues 1387–1481 (RALKQAFADC…TEEEVQETRL (95 aa)) is interaction with GORASP2. Cys-1396 carries the S-palmitoyl cysteine lipid modification. Phosphoserine is present on residues Ser-1445 and Ser-1457. A disordered region spans residues 1453–1481 (HRNSSKYKSRPQIASLKEETEEEVQETRL). Residues 1471–1481 (ETEEEVQETRL) show a composition bias toward acidic residues. Residues 1479 to 1481 (TRL) carry the PDZ-binding motif.

Belongs to the ABC transporter superfamily. ABCC family. CFTR transporter (TC 3.A.1.202) subfamily. As to quaternary structure, monomer; does not require oligomerization for channel activity. May form oligomers in the membrane. Interacts with SLC26A3, SLC26A6 and NHERF1. Interacts with SHANK2. Interacts with MYO6. Interacts (via C-terminus) with GOPC (via PDZ domain); this promotes CFTR internalization and thereby decreases channel activity. Interacts with SLC4A7 through NHERF1. Found in a complex with MYO5B and RAB11A. Interacts with ANO1. Interacts with SLC26A8. Interacts with AHCYL1; the interaction increases CFTR activity. Interacts with CSE1L. The core-glycosylated form interacts with GORASP2 (via PDZ GRASP-type 1 domain) in respone to ER stress. Interacts with MARCHF2; the interaction leads to CFTR ubiqtuitination and degradation. Interacts with ADGRG2. Post-translationally, N-glycosylated. In terms of processing, phosphorylated; cAMP treatment promotes phosphorylation and activates the channel. Dephosphorylation decreases the ATPase activity (in vitro). Phosphorylation at PKA sites activates the channel. Phosphorylation at PKC sites enhances the response to phosphorylation by PKA. Phosphorylated by AMPK; this inhibits channel activity. Ubiquitinated, leading to its degradation in the lysosome. Deubiquitination by USP10 in early endosomes enhances its endocytic recycling to the cell membrane. Ubiquitinated by RNF185 during ER stress. Ubiquitinated by MARCHF2.

Its subcellular location is the apical cell membrane. It is found in the early endosome membrane. It localises to the cell membrane. The protein localises to the recycling endosome membrane. The protein resides in the endoplasmic reticulum membrane. Its subcellular location is the nucleus. It catalyses the reaction ATP + H2O + closed Cl(-) channel = ADP + phosphate + open Cl(-) channel.. The catalysed reaction is chloride(in) = chloride(out). The enzyme catalyses hydrogencarbonate(in) = hydrogencarbonate(out). It carries out the reaction ATP + H2O = ADP + phosphate + H(+). In terms of biological role, epithelial ion channel that plays an important role in the regulation of epithelial ion and water transport and fluid homeostasis. Mediates the transport of chloride ions across the cell membrane. Possesses an intrinsic ATPase activity and utilizes ATP to gate its channel; the passive flow of anions through the channel is gated by cycles of ATP binding and hydrolysis by the ATP-binding domains. The ion channel is also permeable to HCO(3)(-); selectivity depends on the extracellular chloride concentration. Exerts its function also by modulating the activity of other ion channels and transporters. Contributes to the regulation of the pH and the ion content of the epithelial fluid layer. Modulates the activity of the epithelial sodium channel (ENaC) complex, in part by regulating the cell surface expression of the ENaC complex. May regulate bicarbonate secretion and salvage in epithelial cells by regulating the transporter SLC4A7. Can inhibit the chloride channel activity of ANO1. Plays a role in the chloride and bicarbonate homeostasis during sperm epididymal maturation and capacitation. This Callithrix jacchus (White-tufted-ear marmoset) protein is Cystic fibrosis transmembrane conductance regulator.